A 72-amino-acid polypeptide reads, in one-letter code: Small ribosomal subunit protein bS20 (72 aa).

It belongs to the bacterial ribosomal protein bS20 family.

Binds directly to 16S ribosomal RNA. The sequence is that of Small ribosomal subunit protein bS20 (rpsT) from Klebsiella pneumoniae.